We begin with the raw amino-acid sequence, 3410 residues long: MTKKPGRPGRNRAVNMLKRGASRALGPMIKLKRMLFGLLDGRGPLRMVLAILAFFRFTALKPTAGLLKRWGMMDKVHALSLLKGFKKDLASMTDFVHLPKKKSGVSIIGRMLVFSFTAAVRVTLENGMSLMKIQKADVGKVITIRTDRGENRCIVQAMDVGEDCEDTMKYLCPAIENPSEPDDIDCWCDKADAMVTYGRCSKTRHSRRSRRSTNIAGHADSRLDSRGSVWMDTKKATSYLTKAESWALRNPGYALVAAVLGWSLGTSNAQKVIFTVMILLIAPAYSIRCVGVENRDFIEGVSGGTWVDVVLEHGGCVTIMAPDKPTIDLELTSTIAKSMAVTRTYCVQAQVSELSVETRCPTMGEAHNSKSSDAAYVCKKGFSDRGWGNGCGLFGKGSMETCAKFSCQTKAEGRIIQRENLEYTIHMNVHASQETGHFMNDTIASENKHGAKISITATGPSRTADLGDYGMVTLDCEPRAGLDFDNLYLLTLGRNSWLVNRDWFHDVNLPWIGGAEGHWKNRESLVEFGKTHATKREVLALGSQEGTLQVALAGAMIAKFGSNVATINSGHLKCRLKLDKLKIKGTTYHMCKGSFAFTKTPSDTGHGTVLLELTYSGSDGPCRVPISMSVSLSNIEPVGRMVTVNPIVLSSSPQKTIMIEVEPPFGDSFIIAGTGEPRAHYHWRKSGSSIGAAFATTIKGARRLAVIGDDAWDFGSVGGILNSVGKALHQIFGGMFRTLFGGMSWFTQIMIGALCCWLGINARDRTIAVTFLAVGGVLVFLATSVNADSGCALDLKRKEFKCGNGIFVFNDAEAWSHSYRYHPSTPKKLAGSIVRAIEEGQCGVRSVGRLEHEMWRANAREINAILLENEKNLSVVVLESEYYRKAKNLMPIGDEMPFGWKSWGKKFFEEPQLQNQTFVVDGRVGKECPEEKRSWNNFRIEDFGFGVFTTSVWMEQRTEYTEDCDQKVIGAAVKGELAAHSDLGYWIESRSKNGSWELERAYLLESKSCSWPATHTLWNGGVEESELIIPKSRAGPVSHHNTRKGYHNQIKGPWHLTPLEIRFESCPGTTVVTTEECGNRGPSLRTTTTSGKVISEWCCRSCTMPPLSFRTADGCWYGMEIRPLKEREETMVKSHVSAGRGDGVDNLSLGLLVLTIALQEVMRKRILGRHITWMVIAVFMAMILGGLSYRDLGRYLVLVGAAFAERNSGGDLLHLVLVATFKVKPMALLGFVLGGRWCRRQSLLLSIGAVLVNFALEFQGGYFELVDSLALALLFVKAVVQTDTTSVSLPLLAALAPAGCYTVLGTHRFIMLTLVLVTFLGCKKTASVKKAGTAAVGVVLGMVGMKTIPMLGMLMVTSRARRSWPLHEAMAAVGILCALFGALAETEVDLAGPLAAAGLIVMAYVISGRSNDLSIKKVEDVKWSDEAEVTGESVSYHVSLDVRGDPTLTEDSGPGLEKVLLKVGLMAISGIYPVAIPFALGAWFFLEKRCKRAGALWDIPSPREAKPAKVEDGVYRIFSRKLFGESQIGAGVMVKGTFHTMWHVTRGAVLKAGEGLLEPAWADVRKDLICYGGNWKLEEHWDGNEEVQLIALEPGKKVRHIQTKPGIFKTSEGEIGALDLDCMAGTSGSPIVNKNGEVVGLYGNGVLIKGDRYVSAISQKENVGQEDGAEIEDNWFRKRELTVLDLHPGAGKTRRVLPQLVREAVKKRLRTVILAPTRVVASEMYEALRGEPIRYMTPAVQSERTGNEIVDFMCHSTFTMKLFQGVRVPNYNLYIMDEAHFLDPASVAARGYIETRVSMGDAGAIFMTATPPGTTEAFPPSNSPIIDEETRIPDKAWNSGYEWIIEFDGRTVWFVHSIKQGAEIGTCLQKAGKKVLYLNRKTFESEYPKCKSEKWDFVITTDISEMGANFKADRVIDPRKTIKPILLDGRVSMQGPIAITPASAAQRRGRIGRNPEKLGDIYAYSGNVSSDNEGHVSWTEARMLLDNVHVQGGVVAQLYTPEREKTEAYEGEFKLKTNQRKVFSELIRTGDLPVWLAFQVASANVEYHDRKWCFDGPNEHLLLENNQEIEVWTRQGQRRVLKPRWLDGRITSDHLNLKSFKEFASGKRSALSILDLIAVLPSHLNLRLQEALDTAAILSRSEPGSRSYKAALENSPEMIETFLLCALVCLMTIGLVVVLVRGKGPGKLAFGMVSIGVMTWLLWSAGVDPGKIAAAVILVFLLLVVLIPEPEKQRSVQDNQLAMLMLLIATILGGVAANEMGWLEKTKADLSWVVRGRSSTTTPVVELDMKPATAWTLYALATTLLTPLFQHLIVTKYANISLMAIASQAGTLFSMDSGIPFSSIELSVPLLALGCWTQITPCSLILACVLLSTHYAILLPGMQAQAARDAQRRTAAGIMKNAVVDGIVATDIPPLDGAGPLTEKKLGQLLLFAAAVTGVVITRSPRSWSELGVLGSAVGSTLIEGSAGKFWNATTVTAMCNLFRGSYLAGVPLTYTIIRNSNPSNKRGGGIGETLGEKWKARLNQMNTLEFHRYRRSHIMEVDREPARAALKSGDFTRGAAVSRGSAKLRWMHERGYIRLHDKVVDLGCGRGGWCYYSATVKEVKEVKGYTKGGRGHEEPVLTQSYGWNIVQMKSGVDVFYKEAEPCDVVLCDIGECSSSPAVEADRSTKVLELAERWLERNDGADFCIKVLCPYMPEVVEKLSKLQLRYGGCLVRNPLSRNSTHEMYWVSGYKGNLIGVINSTSALLLRRMEIKFAEPRYEEDVNLSCGTRAVSIAPPKFDYKKIGQRVERLKAEHMSTWHYDCEHPYRTWAYHGSYVVKPSGSASSQVNGVVKLLSKPWDVSSEVTGMSMTDTTPFGQQRVFKEKVDTKAPEPPAGAEMASVIVSEWLWKRLNREKKPRLCTKEEFVRKVRGNAALGPVFEEENQWKDAAEAVQDPGFWNLVDMERKNHLEGKCETCVYNMMGKREKKRGEFGKAKGSRAIWYMWLGARFLEFEALGFLNEDHWMSRGNSGGGVEGLGIQKLGYVMREIGEKGGILYADDTAGWDTRITECDLRNEAHIMEYMENEHRKLARAIFELTYKHKVVKVMRPGKGVPLMDIISREDQRGSGQVVTYALNTFTNLVVQLIRMAEAECVLTPEDLHEMSQSAKLRLLKWLKEEGWERLTRMAVSGDDCVVAAPDARFGAALTFLNAMSKIRKDIKEWTPSKGWKNWEEVPFCSHHFHRLQMKDGRELVVPCRSQDELIGRARVTQGPGDLMSSACLAKAYAQMWQLLYFHRRDLRLMGNAICSAVPVDWVPTGRTTWSIHGKGEWMTSENMLEVWNRVWIEENEHMEDKTPVREWTDIPYLGKREDPWCGSYIGYRPRSTWAENIKVPVNVIRVKIGGNKYQDYLGTQKRYESEKRVEFRGVL.

At 1–103 (MTKKPGRPGR…DFVHLPKKKS (103 aa)) the chain is on the cytoplasmic side. Residues 2-15 (TKKPGRPGRNRAVN) are interaction with host EXOC1. The segment at 38–73 (LLDGRGPLRMVLAILAFFRFTALKPTAGLLKRWGMM) is hydrophobic; homodimerization of capsid protein C. Positions 103 to 119 (SGVSIIGRMLVFSFTAA) are cleaved as a propeptide — ER anchor for the capsid protein C, removed in mature form by serine protease NS3. The helical transmembrane segment at 104-124 (GVSIIGRMLVFSFTAAVRVTL) threads the bilayer. Residues 125 to 245 (ENGMSLMKIQ…ATSYLTKAES (121 aa)) lie on the Extracellular side of the membrane. A helical transmembrane segment spans residues 246–266 (WALRNPGYALVAAVLGWSLGT). Over 267–271 (SNAQK) the chain is Cytoplasmic. The helical transmembrane segment at 272 to 286 (VIFTVMILLIAPAYS) threads the bilayer. The Extracellular portion of the chain corresponds to 287–739 (IRCVGVENRD…QIFGGMFRTL (453 aa)). Intrachain disulfides connect C289/C316, C346/C402, C346/C407, C360/C391, C378/C402, and C378/C407. The interval 384 to 397 (DRGWGNGCGLFGKG) is fusion peptide. Residue N440 is glycosylated (N-linked (GlcNAc...) asparagine; by host). 2 disulfide bridges follow: C476-C574 and C591-C622. A helical membrane pass occupies residues 740–760 (FGGMSWFTQIMIGALCCWLGI). Topologically, residues 761–766 (NARDRT) are cytoplasmic. The chain crosses the membrane as a helical span at residues 767–787 (IAVTFLAVGGVLVFLATSVNA). The Extracellular segment spans residues 788 to 1165 (DSGCALDLKR…IALQEVMRKR (378 aa)). Cystine bridges form between C791/C802, C842/C928, C964/C1009, C1066/C1115, C1077/C1098, C1077/C1099, C1098/C1102, and C1099/C1102. N-linked (GlcNAc...) asparagine; by host glycosylation is present at N915. A helical membrane pass occupies residues 1166–1186 (ILGRHITWMVIAVFMAMILGG). The Cytoplasmic portion of the chain corresponds to 1187-1214 (LSYRDLGRYLVLVGAAFAERNSGGDLLH). Residues 1215-1235 (LVLVATFKVKPMALLGFVLGG) form a helical membrane-spanning segment. The Lumenal segment spans residues 1236–1242 (RWCRRQS). Residues 1243–1263 (LLLSIGAVLVNFALEFQGGYF) form a helical membrane-spanning segment. Topologically, residues 1264 to 1284 (ELVDSLALALLFVKAVVQTDT) are cytoplasmic. The helical transmembrane segment at 1285 to 1305 (TSVSLPLLAALAPAGCYTVLG) threads the bilayer. The Lumenal portion of the chain corresponds to 1306–1335 (THRFIMLTLVLVTFLGCKKTASVKKAGTAA). The helical transmembrane segment at 1336–1356 (VGVVLGMVGMKTIPMLGMLMV) threads the bilayer. At 1357-1363 (TSRARRS) the chain is on the cytoplasmic side. The helical transmembrane segment at 1364–1384 (WPLHEAMAAVGILCALFGALA) threads the bilayer. At 1385-1387 (ETE) the chain is on the lumenal side. The chain crosses the membrane as a helical span at residues 1388-1408 (VDLAGPLAAAGLIVMAYVISG). Over 1409–1464 (RSNDLSIKKVEDVKWSDEAEVTGESVSYHVSLDVRGDPTLTEDSGPGLEKVLLKVG) the chain is Cytoplasmic. The interacts with and activates NS3 protease stretch occupies residues 1415–1454 (IKKVEDVKWSDEAEVTGESVSYHVSLDVRGDPTLTEDSGP). The helical intramembrane region spans 1465–1485 (LMAISGIYPVAIPFALGAWFF). Over 1486–2158 (LEKRCKRAGA…KAALENSPEM (673 aa)) the chain is Cytoplasmic. Residues 1493-1670 (AGALWDIPSP…ENVGQEDGAE (178 aa)) form the Peptidase S7 domain. Catalysis depends on charge relay system; for serine protease NS3 activity residues H1543, D1567, and S1627. Positions 1673-1829 (DNWFRKRELT…PSNSPIIDEE (157 aa)) constitute a Helicase ATP-binding domain. The tract at residues 1677–1680 (RKRE) is important for RNA-binding. An ATP-binding site is contributed by 1686 to 1693 (LHPGAGKT). The DEAH box motif lies at 1777–1780 (DEAH). One can recognise a Helicase C-terminal domain in the interval 1839–2006 (SGYEWIIEFD…QLYTPEREKT (168 aa)). Position 1881 is an N6-acetyllysine; by host (K1881). The interval 2153–2157 (ENSPE) is regulates the ATPase activity of NS3 helicase. A helical transmembrane segment spans residues 2159-2179 (IETFLLCALVCLMTIGLVVVL). Over 2180–2185 (VRGKGP) the chain is Lumenal. Positions 2186-2205 (GKLAFGMVSIGVMTWLLWSA) form an intramembrane region, helical. Position 2206 (G2206) is a topological domain, lumenal. A helical membrane pass occupies residues 2207 to 2227 (VDPGKIAAAVILVFLLLVVLI). Residues 2228-2242 (PEPEKQRSVQDNQLA) are Cytoplasmic-facing. Residues 2243-2257 (MLMLLIATILGGVAA) form a helical membrane-spanning segment. Residues 2258–2293 (NEMGWLEKTKADLSWVVRGRSSTTTPVVELDMKPAT) lie on the Lumenal side of the membrane. The helical intramembrane region spans 2294 to 2314 (AWTLYALATTLLTPLFQHLIV). The Lumenal portion of the chain corresponds to 2315 to 2336 (TKYANISLMAIASQAGTLFSMD). Residues 2337–2357 (SGIPFSSIELSVPLLALGCWT) form a helical membrane-spanning segment. Q2358 is a topological domain (cytoplasmic). A helical membrane pass occupies residues 2359 to 2379 (ITPCSLILACVLLSTHYAILL). Residues 2380 to 2420 (PGMQAQAARDAQRRTAAGIMKNAVVDGIVATDIPPLDGAGP) lie on the Lumenal side of the membrane. A helical transmembrane segment spans residues 2421–2441 (LTEKKLGQLLLFAAAVTGVVI). Residues 2442–3410 (TRSPRSWSEL…EKRVEFRGVL (969 aa)) are Cytoplasmic-facing. Residues 2508 to 2773 (GGGIGETLGE…DVNLSCGTRA (266 aa)) form the mRNA cap 0-1 NS5-type MT domain. Residue S2563 coordinates S-adenosyl-L-methionine. S2563 carries the post-translational modification Phosphoserine. Catalysis depends on K2568, which acts as the For 2'-O-MTase activity. S-adenosyl-L-methionine-binding residues include G2593, W2594, T2611, K2612, D2638, and V2639. Residue D2653 is the For 2'-O-MTase activity of the active site. I2654 is an S-adenosyl-L-methionine binding site. Catalysis depends on for 2'-O-MTase activity residues K2690 and E2726. Y2728 serves as a coordination point for S-adenosyl-L-methionine. 4 residues coordinate Zn(2+): E2947, H2951, C2956, and C2959. Residues 3036–3187 (GILYADDTAG…AAPDARFGAA (152 aa)) enclose the RdRp catalytic domain. Zn(2+) contacts are provided by H3222, C3238, and C3356.

It in the N-terminal section; belongs to the class I-like SAM-binding methyltransferase superfamily. mRNA cap 0-1 NS5-type methyltransferase family. In terms of assembly, homodimer. Interacts (via N-terminus) with host EXOC1 (via C-terminus); this interaction results in EXOC1 degradation through the proteasome degradation pathway. As to quaternary structure, forms heterodimers with envelope protein E in the endoplasmic reticulum and Golgi. Homodimer; in the endoplasmic reticulum and Golgi. Interacts with protein prM. Interacts with non-structural protein 1. In terms of assembly, homodimer; Homohexamer when secreted. Interacts with envelope protein E. NS1 interacts with NS4B. Interacts with host complement protein CFH; this interaction leads to the degradation of C3. As to quaternary structure, interacts (via N-terminus) with serine protease NS3. Forms a heterodimer with serine protease NS3. May form homooligomers. In terms of assembly, forms a heterodimer with NS2B. Interacts with non-structural protein 2A (via N-terminus). Interacts with NS4B. Interacts with unphosphorylated RNA-directed RNA polymerase NS5; this interaction stimulates RNA-directed RNA polymerase NS5 guanylyltransferase activity. As to quaternary structure, interacts with serine protease NS3. Homodimer. Interacts with host STAT2; this interaction inhibits the phosphorylation of the latter, and, when all viral proteins are present (polyprotein), targets STAT2 for degradation. Specific enzymatic cleavages in vivo yield mature proteins. Cleavages in the lumen of endoplasmic reticulum are performed by host signal peptidase, whereas cleavages in the cytoplasmic side are performed by serine protease NS3. Signal cleavage at the 2K-4B site requires a prior NS3 protease-mediated cleavage at the 4A-2K site. In terms of processing, cleaved in post-Golgi vesicles by a host furin, releasing the mature small envelope protein M, and peptide pr. This cleavage is incomplete as up to 30% of viral particles still carry uncleaved prM. Post-translationally, N-glycosylated. N-glycosylated. The excreted form is glycosylated and this is required for efficient secretion of the protein from infected cells. In terms of processing, acetylated by host KAT5. Acetylation modulates NS3 RNA-binding and unwinding activities and plays an important positive role for viral replication. Post-translationally, phosphorylated on serines residues. This phosphorylation may trigger NS5 nuclear localization.

It localises to the virion. It is found in the host nucleus. The protein resides in the host cytoplasm. Its subcellular location is the host perinuclear region. The protein localises to the secreted. It localises to the virion membrane. It is found in the host endoplasmic reticulum membrane. The catalysed reaction is Selective hydrolysis of -Xaa-Xaa-|-Yaa- bonds in which each of the Xaa can be either Arg or Lys and Yaa can be either Ser or Ala.. It catalyses the reaction RNA(n) + a ribonucleoside 5'-triphosphate = RNA(n+1) + diphosphate. It carries out the reaction a ribonucleoside 5'-triphosphate + H2O = a ribonucleoside 5'-diphosphate + phosphate + H(+). The enzyme catalyses ATP + H2O = ADP + phosphate + H(+). The catalysed reaction is a 5'-end (5'-triphosphoguanosine)-ribonucleoside in mRNA + S-adenosyl-L-methionine = a 5'-end (N(7)-methyl 5'-triphosphoguanosine)-ribonucleoside in mRNA + S-adenosyl-L-homocysteine. It catalyses the reaction a 5'-end (N(7)-methyl 5'-triphosphoguanosine)-ribonucleoside in mRNA + S-adenosyl-L-methionine = a 5'-end (N(7)-methyl 5'-triphosphoguanosine)-(2'-O-methyl-ribonucleoside) in mRNA + S-adenosyl-L-homocysteine + H(+). Plays a role in virus budding by binding to the cell membrane and gathering the viral RNA into a nucleocapsid that forms the core of a mature virus particle. During virus entry, may induce genome penetration into the host cytoplasm after hemifusion induced by the surface proteins. Can migrate to the cell nucleus where it modulates host functions. Overcomes the anti-viral effects of host EXOC1 by sequestering and degrading the latter through the proteasome degradation pathway. Its function is as follows. Inhibits RNA silencing by interfering with host Dicer. In terms of biological role, prevents premature fusion activity of envelope proteins in trans-Golgi by binding to envelope protein E at pH6.0. After virion release in extracellular space, gets dissociated from E dimers. Functionally, acts as a chaperone for envelope protein E during intracellular virion assembly by masking and inactivating envelope protein E fusion peptide. prM is the only viral peptide matured by host furin in the trans-Golgi network probably to avoid catastrophic activation of the viral fusion activity in acidic Golgi compartment prior to virion release. prM-E cleavage is inefficient, and many virions are only partially matured. These uncleaved prM would play a role in immune evasion. May play a role in virus budding. Exerts cytotoxic effects by activating a mitochondrial apoptotic pathway through M ectodomain. May display a viroporin activity. Its function is as follows. Binds to host cell surface receptor and mediates fusion between viral and cellular membranes. Envelope protein is synthesized in the endoplasmic reticulum in the form of heterodimer with protein prM. They play a role in virion budding in the ER, and the newly formed immature particle is covered with 60 spikes composed of heterodimer between precursor prM and envelope protein E. The virion is transported to the Golgi apparatus where the low pH causes dissociation of PrM-E heterodimers and formation of E homodimers. prM-E cleavage is inefficient, and many virions are only partially matured. These uncleaved prM would play a role in immune evasion. In terms of biological role, involved in immune evasion, pathogenesis and viral replication. Once cleaved off the polyprotein, is targeted to three destinations: the viral replication cycle, the plasma membrane and the extracellular compartment. Essential for viral replication. Required for formation of the replication complex and recruitment of other non-structural proteins to the ER-derived membrane structures. Excreted as a hexameric lipoparticle that plays a role against host immune response. Antagonizing the complement function. Binds to the host macrophages and dendritic cells. Inhibits signal transduction originating from Toll-like receptor 3 (TLR3). Functionally, component of the viral RNA replication complex that functions in virion assembly and antagonizes the host alpha/beta interferon antiviral response. Required cofactor for the serine protease function of NS3. May have membrane-destabilizing activity and form viroporins. Its function is as follows. Displays three enzymatic activities: serine protease, NTPase and RNA helicase. NS3 serine protease, in association with NS2B, performs its autocleavage and cleaves the polyprotein at dibasic sites in the cytoplasm: C-prM, NS2A-NS2B, NS2B-NS3, NS3-NS4A, NS4A-2K and NS4B-NS5. NS3 RNA helicase binds RNA and unwinds dsRNA in the 3' to 5' direction. In terms of biological role, regulates the ATPase activity of the NS3 helicase activity. NS4A allows NS3 helicase to conserve energy during unwinding. Functionally, functions as a signal peptide for NS4B and is required for the interferon antagonism activity of the latter. Induces the formation of ER-derived membrane vesicles where the viral replication takes place. Inhibits interferon (IFN)-induced host STAT1 phosphorylation and nuclear translocation, thereby preventing the establishment of cellular antiviral state by blocking the IFN-alpha/beta pathway. Inhibits STAT2 translocation in the nucleus after IFN-alpha treatment. Its function is as follows. Replicates the viral (+) and (-) RNA genome, and performs the capping of genomes in the cytoplasm. NS5 methylates viral RNA cap at guanine N-7 and ribose 2'-O positions. Besides its role in RNA genome replication, also prevents the establishment of cellular antiviral state by blocking the interferon-alpha/beta (IFN-alpha/beta) signaling pathway. Inhibits host TYK2 and STAT2 phosphorylation, thereby preventing activation of JAK-STAT signaling pathway. The protein is Genome polyprotein of Kokobera virus (KOKV).